A 106-amino-acid chain; its full sequence is Violacin-A (106 aa).

The first 29 residues, 1–29, serve as a signal peptide directing secretion; sequence MDAQKMKMVIGLVLVATTAFALMIPAASA. Residues 30–79 constitute a propeptide that is removed on maturation; it reads VDDFITRRAYDNLVKSGAIKDIPVMAKTIISNPVLEEGMLTYYTNKKLGD. Disulfide bonds link Cys84–Cys98, Cys88–Cys100, and Cys93–Cys105.

It belongs to the cyclotide family. Moebius subfamily. Violacin-A is not a cyclic peptide.

Its function is as follows. Probably participates in a plant defense mechanism. Has low hemolytic activity. In Viola odorata (Sweet violet), this protein is Violacin-A.